A 209-amino-acid chain; its full sequence is MANKKRSASSSRWLQEHFSDKYVLQAQKKGLRSRAWFKLDEIQQSDKLFKPGMTVVDLGAAPGGWSQYVVTQIGGKGRIIACDILPMDPIVGVDFLQGDFRDELVLKALLERVGDSKVQVVMSDMAPNMSGTPAVDIPKSMYLVELALGMCRDVLAPGGSFLVKVFQGEGFDEYLREIRSLFTKVKIRKPDASRARSREVYIVATGRKL.

S-adenosyl-L-methionine is bound by residues Gly63, Trp65, Asp83, Asp99, and Asp124. Lys164 acts as the Proton acceptor in catalysis.

The protein belongs to the class I-like SAM-binding methyltransferase superfamily. RNA methyltransferase RlmE family.

It is found in the cytoplasm. The enzyme catalyses uridine(2552) in 23S rRNA + S-adenosyl-L-methionine = 2'-O-methyluridine(2552) in 23S rRNA + S-adenosyl-L-homocysteine + H(+). Functionally, specifically methylates the uridine in position 2552 of 23S rRNA at the 2'-O position of the ribose in the fully assembled 50S ribosomal subunit. The chain is Ribosomal RNA large subunit methyltransferase E from Pectobacterium atrosepticum (strain SCRI 1043 / ATCC BAA-672) (Erwinia carotovora subsp. atroseptica).